The sequence spans 152 residues: Nucleoside diphosphate kinase B (152 aa).

The tract at residues 1 to 66 is interaction with AKAP13; that stretch reads MAHAERTFIA…DRPFFPGLVK (66 aa). Residues lysine 12, phenylalanine 60, arginine 88, threonine 94, arginine 105, and asparagine 115 each contribute to the ATP site. The Pros-phosphohistidine intermediate role is filled by histidine 118.

This sequence belongs to the NDK family. As to quaternary structure, hexamer of two different chains: An and B (A6, A5B, A4B2, A3B3, A2B4, AB5, B6). Interacts with CAPN8. Interacts with AKAP13. Interacts with ITGB1BP1 (via C-terminal domain region). Interacts with BCL2L10. The cofactor is Mg(2+).

It localises to the cytoplasm. The protein localises to the cell projection. Its subcellular location is the lamellipodium. The protein resides in the ruffle. It is found in the nucleus. The catalysed reaction is a 2'-deoxyribonucleoside 5'-diphosphate + ATP = a 2'-deoxyribonucleoside 5'-triphosphate + ADP. The enzyme catalyses a ribonucleoside 5'-diphosphate + ATP = a ribonucleoside 5'-triphosphate + ADP. It catalyses the reaction ATP + protein L-histidine = ADP + protein N-phospho-L-histidine.. In terms of biological role, major role in the synthesis of nucleoside triphosphates other than ATP. The ATP gamma phosphate is transferred to the NDP beta phosphate via a ping-pong mechanism, using a phosphorylated active-site intermediate. Negatively regulates Rho activity by interacting with AKAP13/LBC. Acts as a transcriptional activator of the MYC gene; binds DNA non-specifically. Binds to both single-stranded guanine- and cytosine-rich strands within the nuclease hypersensitive element (NHE) III(1) region of the MYC gene promoter. Does not bind to duplex NHE III(1). Has G-quadruplex (G4) DNA-binding activity, which is independent of its nucleotide-binding and kinase activity. Binds both folded and unfolded G4 with similar low nanomolar affinities. Stabilizes folded G4s regardless of whether they are prefolded or not. Exhibits histidine protein kinase activity. The protein is Nucleoside diphosphate kinase B (NME2) of Bos taurus (Bovine).